Consider the following 285-residue polypeptide: Purine biosynthesis transcriptional repressor PurR (285 aa).

Residues 1–73 (MKFRRSGRLV…GAAGGVKYIP (73 aa)) form a DNA binding domain region. Residues 74-285 (KMKQAEAEEF…NLLKNGETES (212 aa)) are effector binding domain. A guanosine 3',5'-bis(diphosphate)-binding site is contributed by Y102. A138, T139, K140, and R160 together coordinate 5-phospho-alpha-D-ribose 1-diphosphate. Positions 178 and 179 each coordinate guanosine 3',5'-bis(diphosphate). D203, D204, F205, K207, and A208 together coordinate 5-phospho-alpha-D-ribose 1-diphosphate. A guanosine 3',5'-bis(diphosphate)-binding site is contributed by K207. Guanosine 3',5'-bis(diphosphate) contacts are provided by G209, G210, and T211. T211 serves as a coordination point for 5-phospho-alpha-D-ribose 1-diphosphate.

Belongs to the purine/pyrimidine phosphoribosyltransferase family. PurR subfamily. As to quaternary structure, homodimer.

With respect to regulation, the binding of PurR to DNA, and therefore the repressor activity, is influenced by interaction with the effector molecules 5-phosphoribosyl 1-pyrophosphate (PRPP) and (p)ppGpp. PRPP binds to PurR and reduces affinity of PurR for DNA, which inhibits the repressor activity and induces transcription of the target genes. On the contrary, (p)ppGpp enhances binding of PurR to DNA and repression of the transcription. PRPP and (p)ppGpp compete for PurR binding and allosteric control of transcription. ppGpp maintains PurR-DNA interaction and prevents PRPP from de-repressing PurR regulation during conditions that lead to (p)ppGpp induction, such as upon amino acid starvation. In terms of biological role, DNA-binding transcriptional repressor that controls the expression of a number of genes involved in the synthesis, metabolism and transport of purines. In response to a signal of excess adenine, represses the transcription of the pur operon, which encodes enzymes of the purine biosynthetic pathway. It also represses the expression of the purA and purR genes. In addition, controls the expression of several other genes or operons, which encode enzymes or transporters playing a role in purine nucleotide metabolism. Acts by binding directly to specific DNA sequences, named PurBoxes, in the upstream control regions of affected genes. Two PurBoxes are required for high-affinity PurR binding. Also responds to amino acid starvation via (p)ppGpp, which strongly increases PurR activity and repression of purine nucleotide biosynthesis genes. This Bacillus subtilis (strain 168) protein is Purine biosynthesis transcriptional repressor PurR.